The chain runs to 197 residues: Large ribosomal subunit protein eL15 (197 aa).

3 stretches are compositionally biased toward basic residues: residues 70 to 90 (PKGG…RMGK), 163 to 179 (RGKT…RKRG), and 187 to 197 (PSLRAHRRRGK). Disordered regions lie at residues 70 to 99 (PKGG…GKSK) and 163 to 197 (RGKT…RRGK).

The protein belongs to the eukaryotic ribosomal protein eL15 family.

This Methanopyrus kandleri (strain AV19 / DSM 6324 / JCM 9639 / NBRC 100938) protein is Large ribosomal subunit protein eL15.